A 226-amino-acid chain; its full sequence is N-(5'-phosphoribosyl)anthranilate isomerase (226 aa).

Belongs to the TrpF family.

The catalysed reaction is N-(5-phospho-beta-D-ribosyl)anthranilate = 1-(2-carboxyphenylamino)-1-deoxy-D-ribulose 5-phosphate. It functions in the pathway amino-acid biosynthesis; L-tryptophan biosynthesis; L-tryptophan from chorismate: step 3/5. This Synechococcus sp. (strain JA-3-3Ab) (Cyanobacteria bacterium Yellowstone A-Prime) protein is N-(5'-phosphoribosyl)anthranilate isomerase.